Here is a 257-residue protein sequence, read N- to C-terminus: Zinc uptake system ATP-binding protein ZurA (257 aa).

An ABC transporter domain is found at 5–241 (IEVNNVSYHY…ADRELEILAE (237 aa)). Residue 37-44 (GPNGSGKS) participates in ATP binding.

The protein belongs to the ABC transporter superfamily.

Functionally, involved in a zinc uptake transport system. This is Zinc uptake system ATP-binding protein ZurA (zurA) from Listeria monocytogenes serovar 1/2a (strain ATCC BAA-679 / EGD-e).